The primary structure comprises 489 residues: Rhamnulokinase (489 aa).

13-17 (ASSGR) contacts ATP. A disulfide bond links Cys68 and Cys222. Residues Gly83 and 236-238 (HDT) each bind substrate. Catalysis depends on Asp237, which acts as the Proton acceptor. Thr259 is a binding site for ATP. Residue Asn296 coordinates substrate. Gln304 lines the ATP pocket. The cysteines at positions 353 and 370 are disulfide-linked. Gly402 is a binding site for ATP. Cysteines 413 and 417 form a disulfide.

This sequence belongs to the rhamnulokinase family. Mg(2+) is required as a cofactor.

The catalysed reaction is L-rhamnulose + ATP = L-rhamnulose 1-phosphate + ADP + H(+). Its pathway is carbohydrate degradation; L-rhamnose degradation; glycerone phosphate from L-rhamnose: step 2/3. Functionally, involved in the catabolism of L-rhamnose (6-deoxy-L-mannose). Catalyzes the transfer of the gamma-phosphate group from ATP to the 1-hydroxyl group of L-rhamnulose to yield L-rhamnulose 1-phosphate. The sequence is that of Rhamnulokinase from Salmonella dublin (strain CT_02021853).